Here is a 535-residue protein sequence, read N- to C-terminus: MTKFIFVTGGVVSSLGKGITAASLGRLLKDRGLKVTIQKFDPYLNVDPGTMSPYQHGEVFVTDDGAETDLDLGHYERFIDINLNKYSNVTAGKVYSHVLKKERRGDYLGGTVQVIPHITNEIKERLLLAGESTNADVVITEIGGTTGDIESLPFIEAIRQIRSDLGRENVMYVHCTLLPYIKAAGEMKTKPTQHSVKELRGLGIQPDLIVVRTEYEMTQDLKDKIALFCDINKESVIECRDASSLYEIPLQLSAQDMDDIVIKRLDLDAKYETQLDEWQYLLDTVNSLDGTITIGLVGKYVSLQDAYLSVVESLKHAGYPLKKDVVVKWIDSGEVNDNNVEDYLKDVDGILVPGGFGFRASEGKIAAIKYARENNVPYFGICLGMQLATVEFARNVLGLEGAHSAELNPSTPYPIIDLLPEQKDIEDLGGTLRLGLYPCKIKENTLAHQIYDAVNIEERHRHRYEFNNEFREQLEANGMVFSGTSPDGRLVEMVEIPENDFYIACQFHPEFLSRPNRPQPIFKSFVEAAYKHQNK.

The amidoligase domain stretch occupies residues 1–267 (MTKFIFVTGG…DDIVIKRLDL (267 aa)). S13 contacts CTP. Residue S13 coordinates UTP. Residue 14 to 19 (SLGKGI) participates in ATP binding. Y54 provides a ligand contact to L-glutamine. D71 contacts ATP. 2 residues coordinate Mg(2+): D71 and E141. Residues 148-150 (DIE), 188-193 (KTKPTQ), and K224 each bind CTP. UTP is bound by residues 188–193 (KTKPTQ) and K224. 240 to 242 (RDA) contributes to the ATP binding site. The Glutamine amidotransferase type-1 domain maps to 293–535 (TIGLVGKYVS…VEAAYKHQNK (243 aa)). Residue G355 coordinates L-glutamine. C382 serves as the catalytic Nucleophile; for glutamine hydrolysis. Residues 383-386 (LGMQ), E406, and R463 each bind L-glutamine. Catalysis depends on residues H508 and E510.

This sequence belongs to the CTP synthase family. As to quaternary structure, homotetramer.

It catalyses the reaction UTP + L-glutamine + ATP + H2O = CTP + L-glutamate + ADP + phosphate + 2 H(+). The enzyme catalyses L-glutamine + H2O = L-glutamate + NH4(+). The catalysed reaction is UTP + NH4(+) + ATP = CTP + ADP + phosphate + 2 H(+). It participates in pyrimidine metabolism; CTP biosynthesis via de novo pathway; CTP from UDP: step 2/2. With respect to regulation, allosterically activated by GTP, when glutamine is the substrate; GTP has no effect on the reaction when ammonia is the substrate. The allosteric effector GTP functions by stabilizing the protein conformation that binds the tetrahedral intermediate(s) formed during glutamine hydrolysis. Inhibited by the product CTP, via allosteric rather than competitive inhibition. In terms of biological role, catalyzes the ATP-dependent amination of UTP to CTP with either L-glutamine or ammonia as the source of nitrogen. Regulates intracellular CTP levels through interactions with the four ribonucleotide triphosphates. This Staphylococcus haemolyticus (strain JCSC1435) protein is CTP synthase.